Consider the following 204-residue polypeptide: Somatotropin (204 aa).

Positions 1–17 are cleaved as a signal peptide; sequence MDRVVLLLSVLSLGVSS. The residue at position 18 (Gln18) is a Pyrrolidone carboxylic acid. Disulfide bonds link Cys69–Cys177 and Cys194–Cys202.

Belongs to the somatotropin/prolactin family.

Its subcellular location is the secreted. Its function is as follows. Growth hormone plays an important role in growth control and is involved in the regulation of several anabolic processes. Implicated as an osmoregulatory substance important for seawater adaptation. This Seriola quinqueradiata (Five-ray yellowtail) protein is Somatotropin (gh).